The following is a 303-amino-acid chain: Major fimbrium anchoring subunit FimB (303 aa).

Residues Met-1–Gly-22 form the signal peptide. Cys-23 carries the N-palmitoyl cysteine lipid modification. Cys-23 carries S-diacylglycerol cysteine lipidation.

The protein belongs to the bacteroidetes fimbrillin superfamily. FimB/Mfa2 family. As to quaternary structure, fimB is not part of the fimbrium itself, but anchors the fimbrium in the outer membrane. Linear, head-to-tail oligomerization of fimbrial subunits mediates assembly of the fimbrium stalk, while the minor components FimC, FimD and FimE probably form the fimbrium tip. The anchoring subunit FimB limits fimbrium length and is important for solid fimbrium attachment to the outer membrane. In its absence, the major fimbriae become very long and are easily detached from the membrane.

The protein resides in the cell outer membrane. In terms of biological role, anchoring subunit of the major fimbriae. Regulates fimbrial length. These filamentous pili are attached to the cell surface; they mediate biofilm formation, adhesion onto host cells and onto other bacteria that are part of the oral microbiome. Fimbriae of P.gingivalis are major virulence factors. In Porphyromonas gingivalis (strain ATCC BAA-308 / W83), this protein is Major fimbrium anchoring subunit FimB.